A 361-amino-acid chain; its full sequence is Peptide chain release factor 1 (361 aa).

Q233 carries the post-translational modification N5-methylglutamine. Residues 282–310 (SKKQAERAQNRKSQVGSGDRSERIRTYNF) form a disordered region.

This sequence belongs to the prokaryotic/mitochondrial release factor family. Post-translationally, methylated by PrmC. Methylation increases the termination efficiency of RF1.

It is found in the cytoplasm. Peptide chain release factor 1 directs the termination of translation in response to the peptide chain termination codons UAG and UAA. The chain is Peptide chain release factor 1 from Treponema denticola (strain ATCC 35405 / DSM 14222 / CIP 103919 / JCM 8153 / KCTC 15104).